We begin with the raw amino-acid sequence, 289 residues long: Polyamine aminopropyltransferase (289 aa).

Positions 5 to 245 (PGPITLIEPL…YAVNFILGSL (241 aa)) constitute a PABS domain. Gln-36 is an S-methyl-5'-thioadenosine binding site. His-67 and Glu-91 together coordinate spermidine. S-methyl-5'-thioadenosine-binding positions include Asp-111 and 143 to 144 (DG). Asp-164 serves as the catalytic Proton acceptor.

This sequence belongs to the spermidine/spermine synthase family. As to quaternary structure, homodimer or homotetramer.

The protein resides in the cytoplasm. The enzyme catalyses S-adenosyl 3-(methylsulfanyl)propylamine + putrescine = S-methyl-5'-thioadenosine + spermidine + H(+). It functions in the pathway amine and polyamine biosynthesis; spermidine biosynthesis; spermidine from putrescine: step 1/1. Functionally, catalyzes the irreversible transfer of a propylamine group from the amino donor S-adenosylmethioninamine (decarboxy-AdoMet) to putrescine (1,4-diaminobutane) to yield spermidine. The sequence is that of Polyamine aminopropyltransferase from Pyrobaculum calidifontis (strain DSM 21063 / JCM 11548 / VA1).